The chain runs to 64 residues: Conotoxin reg3.16 (64 aa).

A signal peptide spans 1–19; the sequence is MSKLGVFLTICLLLFPLTA. The propeptide occupies 20-49; that stretch reads LQLDGDQPADKPAQRKLKILPKRKHWTRFT. 3 cysteine pairs are disulfide-bonded: cysteine 50-cysteine 64, cysteine 51-cysteine 60, and cysteine 56-cysteine 63.

This sequence belongs to the conotoxin M superfamily. Expressed by the venom duct.

It is found in the secreted. This is Conotoxin reg3.16 from Conus regius (Crown cone).